A 183-amino-acid chain; its full sequence is Alkyl hydroperoxide reductase AhpD (183 aa).

The Proton donor role is filled by C132. The cysteines at positions 132 and 135 are disulfide-linked. The active-site Cysteine sulfenic acid (-SOH) intermediate is the C135.

The protein belongs to the AhpD family.

It carries out the reaction N(6)-[(R)-dihydrolipoyl]-L-lysyl-[lipoyl-carrier protein] + a hydroperoxide = N(6)-[(R)-lipoyl]-L-lysyl-[lipoyl-carrier protein] + an alcohol + H2O. In terms of biological role, antioxidant protein with alkyl hydroperoxidase activity. Required for the reduction of the AhpC active site cysteine residues and for the regeneration of the AhpC enzyme activity. The chain is Alkyl hydroperoxide reductase AhpD from Caulobacter vibrioides (strain ATCC 19089 / CIP 103742 / CB 15) (Caulobacter crescentus).